Reading from the N-terminus, the 130-residue chain is Small ribosomal subunit protein uS9 (130 aa).

This sequence belongs to the universal ribosomal protein uS9 family.

The chain is Small ribosomal subunit protein uS9 from Pseudomonas aeruginosa (strain LESB58).